The following is a 271-amino-acid chain: Dermonecrotic toxin LhSicTox-alphaIA2bv (271 aa).

Residue His-3 is part of the active site. Glu-23 and Asp-25 together coordinate Mg(2+). 2 cysteine pairs are disulfide-bonded: Cys-43–Cys-49 and Cys-45–Cys-188. Asp-83 provides a ligand contact to Mg(2+).

Belongs to the arthropod phospholipase D family. Class II subfamily. The cofactor is Mg(2+). As to expression, expressed by the venom gland.

The protein resides in the secreted. The catalysed reaction is an N-(acyl)-sphingosylphosphocholine = an N-(acyl)-sphingosyl-1,3-cyclic phosphate + choline. The enzyme catalyses an N-(acyl)-sphingosylphosphoethanolamine = an N-(acyl)-sphingosyl-1,3-cyclic phosphate + ethanolamine. It carries out the reaction a 1-acyl-sn-glycero-3-phosphocholine = a 1-acyl-sn-glycero-2,3-cyclic phosphate + choline. It catalyses the reaction a 1-acyl-sn-glycero-3-phosphoethanolamine = a 1-acyl-sn-glycero-2,3-cyclic phosphate + ethanolamine. Dermonecrotic toxins cleave the phosphodiester linkage between the phosphate and headgroup of certain phospholipids (sphingolipid and lysolipid substrates), forming an alcohol (often choline) and a cyclic phosphate. This toxin acts on sphingomyelin (SM). It may also act on ceramide phosphoethanolamine (CPE), lysophosphatidylcholine (LPC) and lysophosphatidylethanolamine (LPE), but not on lysophosphatidylserine (LPS), and lysophosphatidylglycerol (LPG). It acts by transphosphatidylation, releasing exclusively cyclic phosphate products as second products. Induces dermonecrosis, hemolysis, increased vascular permeability, edema, inflammatory response, and platelet aggregation. This is Dermonecrotic toxin LhSicTox-alphaIA2bv from Loxosceles hirsuta (Recluse spider).